A 367-amino-acid chain; its full sequence is AdoMet-dependent heme synthase (367 aa).

Positions D15–A238 constitute a Radical SAM core domain. [4Fe-4S] cluster contacts are provided by C31, C35, and C38.

Belongs to the radical SAM superfamily. [4Fe-4S] cluster serves as cofactor.

The catalysed reaction is Fe-coproporphyrin III + 2 S-adenosyl-L-methionine = heme b + 2 5'-deoxyadenosine + 2 L-methionine + 2 CO2. It participates in porphyrin-containing compound metabolism; protoheme biosynthesis. In terms of biological role, involved in siroheme-dependent heme b biosynthesis. Catalyzes the conversion of Fe-coproporphyrin III into heme by the oxidative decarboxylation of two propionate side chains. This is AdoMet-dependent heme synthase from Nitratidesulfovibrio vulgaris (strain ATCC 29579 / DSM 644 / CCUG 34227 / NCIMB 8303 / VKM B-1760 / Hildenborough) (Desulfovibrio vulgaris).